A 615-amino-acid polypeptide reads, in one-letter code: Threonine--tRNA ligase (615 aa).

The tract at residues 1–132 is editing domain; sequence MRILQLHCDR…PLAEGFKVIT (132 aa). Positions 196 to 495 are catalytic; sequence PHVALMKRMG…SARGTKPELP (300 aa). 3 residues coordinate Zn(2+): Cys288, His340, and His464.

The protein belongs to the class-II aminoacyl-tRNA synthetase family. Homodimer. The cofactor is Zn(2+).

The protein localises to the cytoplasm. The catalysed reaction is tRNA(Thr) + L-threonine + ATP = L-threonyl-tRNA(Thr) + AMP + diphosphate + H(+). In terms of biological role, catalyzes the attachment of threonine to tRNA(Thr) in a two-step reaction: L-threonine is first activated by ATP to form Thr-AMP and then transferred to the acceptor end of tRNA(Thr). Also edits incorrectly charged L-seryl-tRNA(Thr). In Cenarchaeum symbiosum (strain A), this protein is Threonine--tRNA ligase (thrS).